Here is a 61-residue protein sequence, read N- to C-terminus: Mu-diguetoxin-Dc1c (61 aa).

Disulfide bonds link Cys-12/Cys-25, Cys-19/Cys-39, and Cys-24/Cys-53.

Belongs to the neurotoxin 26 (DTX) family. Expressed by the venom gland.

The protein localises to the secreted. In terms of biological role, acts by delaying the inactivation of presynaptic voltage-sensitive sodium channels (Nav). Acts against insects and causes a progressive spastic paralysis. In Diguetia canities (Desert bush spider), this protein is Mu-diguetoxin-Dc1c.